The following is a 272-amino-acid chain: Replication-associated protein A (272 aa).

Residues 11–114 form the CRESS-DNA virus Rep endonuclease domain; the sequence is SHRSPNTFLT…PLALFERGTF (104 aa). An RCR-1 motif is present at residues 18–21; that stretch reads FLTY. A divalent metal cation is bound by residues E52 and H62. The RCR-2 signature appears at 60–65; it reads CLHALI. Catalysis depends on Y100, which acts as the For DNA cleavage activity. The short motif at 100 to 103 is the RCR-3 element; sequence YITK. Position 104 (E104) interacts with a divalent metal cation. The tract at residues 175 to 187 is oligomerization; it reads SANKLFPDIQEEF. The LXCXE motif, interaction with host RBR1 motif lies at 198–202; it reads LLCNE. The transactivation stretch occupies residues 221-230; that stretch reads LLLQPNCYSI. Residues 251–265 show a composition bias toward polar residues; that stretch reads QGSAASTSSVQQGQE. Residues 251–272 form a disordered region; it reads QGSAASTSSVQQGQENLHGPEA.

It belongs to the geminiviridae Rep protein family. Homooligomer. Interacts (via LXCXE domain) with host retinoblastoma-related protein 1 (RBR1), and may thereby deregulate the host cell cycle. Part of the C- and V-complexes which are RepA-Rep-DNA complexes involved in the c-sense and v-sense transcription.

It localises to the host nucleus. Its subcellular location is the host cytoplasm. Implicated in enhancement of V-sense gene expression. Acts a an inhibitor of C-sense gene transcription. In Avena sativa (Oat), this protein is Replication-associated protein A.